A 430-amino-acid chain; its full sequence is Gustatory receptor-like 43a (430 aa).

The Cytoplasmic portion of the chain corresponds to 1–31; it reads MSTGSHSPEAMWSATNFRRHQRKPNQVLHRW. Residues 32–52 form a helical membrane-spanning segment; sequence FFKGSAWIIYAIACGLHFFKL. The Extracellular segment spans residues 53 to 79; it reads HYNERTNQVEESQYHRIWSKIVVVLKV. Residues 80–100 form a helical membrane-spanning segment; sequence ILLASPYLQYFVLGLGIYIHI. At 101 to 110 the chain is on the cytoplasmic side; sequence TLVQDSKAQN. Residues 111–131 traverse the membrane as a helical segment; that stretch reads FLMSLIVLGIVIGVLRRLLIF. The Extracellular segment spans residues 132–168; sequence LHLKRDRRFLKHTVNEILHITSALEQKFGMEYKCDST. A helical membrane pass occupies residues 169–189; that stretch reads LLVVYLAKLWILTVMLDSLWY. At 190-277 the chain is on the cytoplasmic side; sequence KPYFLSSIFL…RDNVSWLSTS (88 aa). A helical transmembrane segment spans residues 278-298; the sequence is VYLMIFTCIFNAELLIECSLF. At 299 to 306 the chain is on the extracellular side; sequence AGDELENK. A helical membrane pass occupies residues 307-327; it reads IYIITDGCLGPVCVPILYVLI. Residues 328–396 are Cytoplasmic-facing; the sequence is LGMCTDRFRD…IILDITCDRE (69 aa). The chain crosses the membrane as a helical span at residues 397 to 417; that stretch reads FVMDYIVTVILTALSLVQYTI. Topologically, residues 418 to 430 are extracellular; it reads STGGNISECVTHK. Asn422 carries an N-linked (GlcNAc...) asparagine glycan.

It is found in the cell membrane. The sequence is that of Gustatory receptor-like 43a from Drosophila melanogaster (Fruit fly).